Here is a 454-residue protein sequence, read N- to C-terminus: CBL-interacting protein kinase 17 (454 aa).

A Protein kinase domain is found at 13–268 (YEMGRTLGEG…MAGIKSHEWF (256 aa)). Residues 19 to 27 (LGEGNFGKV) and Lys-42 each bind ATP. Catalysis depends on Asp-136, which acts as the Proton acceptor. Positions 154 to 183 (DFGLSALPQHLGNDGLLHTTCGSPNYIAPE) are activation loop. In terms of domain architecture, NAF spans 304–328 (KNSHQINAFQLIGMASSLDLSGFFE). Residues 334–363 (QRRIRFTSTHPPKDAFDKIESSATELGFQV) form a PPI region.

This sequence belongs to the protein kinase superfamily. CAMK Ser/Thr protein kinase family. SNF1 subfamily. Mn(2+) is required as a cofactor.

It carries out the reaction L-seryl-[protein] + ATP = O-phospho-L-seryl-[protein] + ADP + H(+). It catalyses the reaction L-threonyl-[protein] + ATP = O-phospho-L-threonyl-[protein] + ADP + H(+). Functionally, CIPK serine-threonine protein kinases interact with CBL proteins. Binding of a CBL protein to the regulatory NAF domain of CIPK protein lead to the activation of the kinase in a calcium-dependent manner. The chain is CBL-interacting protein kinase 17 (CIPK17) from Oryza sativa subsp. japonica (Rice).